Here is a 360-residue protein sequence, read N- to C-terminus: Serine/threonine-protein kinase SAPK4 (360 aa).

Residues 4-260 enclose the Protein kinase domain; sequence YEAVRDIGSG…MKEIKSHPWF (257 aa). ATP is bound by residues 10-18 and Lys-33; that span reads IGSGNFGVA. Asp-123 (proton acceptor) is an active-site residue. A disordered region spans residues 303-360; sequence TMPKSSRTGYWSDAGSDEEEKEEEERPEENEEEEEDEYDKRVKEVHASGELRMSSLRI. Positions 317 to 339 are enriched in acidic residues; it reads GSDEEEKEEEERPEENEEEEEDE. A compositionally biased stretch (basic and acidic residues) spans 340 to 351; sequence YDKRVKEVHASG.

Belongs to the protein kinase superfamily. Ser/Thr protein kinase family. May be phosphorylated. Expressed in leaf blades, leaf sheaths and roots. Expressed in shoots and roots of young seedlings.

It catalyses the reaction L-seryl-[protein] + ATP = O-phospho-L-seryl-[protein] + ADP + H(+). The catalysed reaction is L-threonyl-[protein] + ATP = O-phospho-L-threonyl-[protein] + ADP + H(+). Its activity is regulated as follows. Activated by hyperosmotic stress. Its function is as follows. May play a role in signal transduction of hyperosmotic response. The polypeptide is Serine/threonine-protein kinase SAPK4 (SAPK4) (Oryza sativa subsp. japonica (Rice)).